Consider the following 103-residue polypeptide: Large ribosomal subunit protein bL21 (103 aa).

Belongs to the bacterial ribosomal protein bL21 family. In terms of assembly, part of the 50S ribosomal subunit. Contacts protein L20.

This protein binds to 23S rRNA in the presence of protein L20. This Burkholderia mallei (strain NCTC 10247) protein is Large ribosomal subunit protein bL21.